The following is a 35-amino-acid chain: MSDIN-like toxin proprotein 1 (35 aa).

A propeptide spanning residues 1–10 (MSDINATRLP) is cleaved from the precursor. The segment at residues 11–20 (IIIVLGLIIP) is a cross-link (cyclopeptide (Ile-Pro)). Residues 21-35 (LCVSDIEMILTRGER) constitute a propeptide that is removed on maturation.

This sequence belongs to the MSDIN fungal toxin family. Processed by the macrocyclase-peptidase enzyme POPB to yield a toxic cyclic decapeptide. POPB first removes 10 residues from the N-terminus. Conformational trapping of the remaining peptide forces the enzyme to release this intermediate rather than proceed to macrocyclization. The enzyme rebinds the remaining peptide in a different conformation and catalyzes macrocyclization of the N-terminal 10 residues.

Probable toxin that belongs to the MSDIN-like toxin family responsible for a large number of food poisoning cases and deaths. The sequence is that of MSDIN-like toxin proprotein 1 from Amanita rimosa.